The sequence spans 157 residues: Crossover junction endodeoxyribonuclease RuvC (157 aa).

Active-site residues include Asp7, Glu67, and Asp140. Positions 7, 67, and 140 each coordinate Mg(2+).

Belongs to the RuvC family. Homodimer which binds Holliday junction (HJ) DNA. The HJ becomes 2-fold symmetrical on binding to RuvC with unstacked arms; it has a different conformation from HJ DNA in complex with RuvA. In the full resolvosome a probable DNA-RuvA(4)-RuvB(12)-RuvC(2) complex forms which resolves the HJ. Mg(2+) serves as cofactor.

The protein resides in the cytoplasm. The enzyme catalyses Endonucleolytic cleavage at a junction such as a reciprocal single-stranded crossover between two homologous DNA duplexes (Holliday junction).. Its function is as follows. The RuvA-RuvB-RuvC complex processes Holliday junction (HJ) DNA during genetic recombination and DNA repair. Endonuclease that resolves HJ intermediates. Cleaves cruciform DNA by making single-stranded nicks across the HJ at symmetrical positions within the homologous arms, yielding a 5'-phosphate and a 3'-hydroxyl group; requires a central core of homology in the junction. The consensus cleavage sequence is 5'-(A/T)TT(C/G)-3'. Cleavage occurs on the 3'-side of the TT dinucleotide at the point of strand exchange. HJ branch migration catalyzed by RuvA-RuvB allows RuvC to scan DNA until it finds its consensus sequence, where it cleaves and resolves the cruciform DNA. The polypeptide is Crossover junction endodeoxyribonuclease RuvC (Thermosipho melanesiensis (strain DSM 12029 / CIP 104789 / BI429)).